Consider the following 586-residue polypeptide: Proton channel OTOP1 (586 aa).

The Cytoplasmic portion of the chain corresponds to 1 to 52 (MVEHGGTDSMWLNKYNPAAASSASSSSSSDAENKLFSRLKVSLTKKYPQKNA). Residues 53-74 (ELLSAQYGTNLLLLGVSVMLAL) traverse the membrane as a helical segment. Residues 75 to 82 (AAQSGPVK) lie on the Extracellular side of the membrane. Residues 83-106 (EEHLLSFITVLMLVQLVWMLCYMI) traverse the membrane as a helical segment. Over 107–124 (RRERERSPVPERDAHAGA) the chain is Cytoplasmic. Residues 125–147 (SWIRGGLTMLALLSLIMDAFRIG) traverse the membrane as a helical segment. At 148–157 (YFVGYHSCIS) the chain is on the extracellular side. The chain crosses the membrane as a helical span at residues 158-182 (AALGVYPIVHALHTISQVHFLWFHI). Residues 183-190 (KDVIKKYE) are Cytoplasmic-facing. Residues 191–217 (TFERFGVIHAVFTNLLLWCNGVMSETE) form a helical membrane-spanning segment. The Extracellular portion of the chain corresponds to 218-255 (HFMHNHRRRLIEMGYANLSTVDVQPHCNCTTSVCSMFS). A helical transmembrane segment spans residues 256–281 (TSLYYLYPFNIEYHIFVSAMLFVMWK). Topologically, residues 282–303 (NIGRTLDRHSNRKRRSTGSTGL) are cytoplasmic. A helical transmembrane segment spans residues 304–326 (LLGPLGGLVALASSVSVLVVYLI). The Extracellular portion of the chain corresponds to 327-336 (HLEKTEEMHE). The chain crosses the membrane as a helical span at residues 337 to 362 (AAVSMFYYYGVAMMACMCVGSGTGLL). Over 363–380 (VYRMENRPMDTGSNPART) the chain is Cytoplasmic. The helical transmembrane segment at 381 to 405 (LDTELLLASSLGSWLMSWCSVVASV) threads the bilayer. The Extracellular portion of the chain corresponds to 406–417 (AEAGQKSPSFSW). A helical transmembrane segment spans residues 418–438 (TSLTYSLLLVLEKCIQNLFIV). Residues 439-518 (ESLYRRHSEE…TPGRKRQILK (80 aa)) are Cytoplasmic-facing. The disordered stretch occupies residues 484–505 (PAAGSHALSRKQPDAPLPAGQR). Residues 519-537 (NICMFLFMCNISLWILPAF) form a helical membrane-spanning segment. The Extracellular segment spans residues 538–555 (GCRPQYDNPLENETFGTS). The chain crosses the membrane as a helical span at residues 556–579 (VWTTVLNVAIPLNLFYRMHSVASL). The Cytoplasmic portion of the chain corresponds to 580–586 (FEVFRKV).

Belongs to the otopetrin family. In terms of assembly, homodimer.

It is found in the cell membrane. Its subcellular location is the cell projection. It localises to the microvillus. It catalyses the reaction H(+)(in) = H(+)(out). Its activity is regulated as follows. Activated by both acid and alkali, with proton influx in response to extracellular acid and proton efflux during alkali stimulation. Inhibited by Zn(2+); this inhibition is thought to be pH-sensitive. Currents evoked in response to mild acid (pH 6.0) stimulus may also be mildly potentiated by exposure to Zn(2+). Activated by NH(4)Cl. Proton-selective ion channel. Biphasically modulated by acid and alkali, mediating proton influx and efflux in response to extracellular acid and base stimulation, respectively. May be involved in acid and base perception. Sensor for ammonium chloride (NH(4)Cl) in taste receptor cells. NH(4)Cl acts by increasing the intracellular pH, thereby generating a driving force for proton entry through OTOP1 channel. Plays a role in the regulation of Ca(2+) flux in response to purigenic (ATP, ADP and UDP) stimuli, leading to increase in cytosolic Ca(2+) due to influx of extracellular calcium. May play this role by inhibiting P2Y purinoceptor-mediated Ca(2+) release in a Ca(2+)-dependent manner and promote an influx of Ca(2+) in response to ATP. Through this mechanism and possibly others, plays a role in the formation and function of calcium carbonate-based structures in the vestibular system of the inner ear, called otoconia, that sense gravity and linear acceleration. In Danio rerio (Zebrafish), this protein is Proton channel OTOP1.